Reading from the N-terminus, the 195-residue chain is Urease accessory protein UreG (195 aa).

9 to 16 (GPVGSGKT) provides a ligand contact to GTP.

It belongs to the SIMIBI class G3E GTPase family. UreG subfamily. Homodimer. UreD, UreF and UreG form a complex that acts as a GTP-hydrolysis-dependent molecular chaperone, activating the urease apoprotein by helping to assemble the nickel containing metallocenter of UreC. The UreE protein probably delivers the nickel.

The protein localises to the cytoplasm. Facilitates the functional incorporation of the urease nickel metallocenter. This process requires GTP hydrolysis, probably effectuated by UreG. This chain is Urease accessory protein UreG, found in Aliarcobacter butzleri (strain RM4018) (Arcobacter butzleri).